Consider the following 563-residue polypeptide: MDVGELLSYQPNRGTKRPRDDEEEELKMRRRQAGTRERGRYREEEMTVVEEADDDKKRLLQIIDREGEEEEEEEEPLDESSVKKMILTFEKRSYKNQELRIKFPDNPEKFMESELDLNDIIQEMHVVATMPDLYHLLVELNAVQSLLGLLGHDNTDVSIAVVDLLQELTDIDTLHESEEGAEVLTDALVDGQVVALLVQDLERLDESVKEEADGVHNTLAIVENMAEFRPEMCTEAAQQGLLQWLLKRLKAKMPFDANKLYCSEVLAILLQDNDENRELLGELDGIDVLLQQLSVFKRHNPSTAEEQEMMENLFDSLCSCLMLSSNRERFLKGEGLQLMNLMLREKKISRSSALKVLDHAMIGPEGTDNCHKFVDILGLRTIFPLFMKSPRKIKKVGTTEKEHEEHVCSILASLLRNLRGQQRTRLLNKFTENDSEKVDRLMELHFKYLDAVQVADKKIEGEKHDMVRRGEIIDNDIEDEFYLRRLDAGLFVLQHICYIMAEICNANVPQIRQRVHQILNMRGSSIKIVRHIIKEYAENIGDGRSPEFRESEQKRILALLENF.

Met1 bears the N-acetylmethionine mark. Residues 1-49 form a disordered region; sequence MDVGELLSYQPNRGTKRPRDDEEEELKMRRRQAGTRERGRYREEEMTVV. The short motif at 16–33 is the Nuclear localization signal element; that stretch reads KRPRDDEEEELKMRRRQA. The span at 34 to 45 shows a compositional bias: basic and acidic residues; sequence GTRERGRYREEE. HEAT repeat units lie at residues 79–129 and 134–176; these read ESSV…VVAT and YHLL…TLHE. Lys91 is modified (N6-acetyllysine). A Nuclear export signal (NES) motif is present at residues 130-140; it reads MPDLYHLLVEL. ARM repeat units lie at residues 178-228, 229-273, 274-323, 325-363, and 364-417; these read EEGA…MAEF, RPEM…LQDN, DENR…CLML, SNRE…AMIG, and PEGT…LLRN. Ser389 is subject to Phosphoserine. A coiled-coil region spans residues 476–540; the sequence is DIEDEFYLRR…HIIKEYAENI (65 aa). Ser545 bears the Phosphoserine mark.

In terms of assembly, component of the PRP19-CDC5L splicing complex composed of a core complex comprising a homotetramer of PRPF19, CDC5L, PLRG1 and BCAS2, and at least three less stably associated proteins CTNNBL1, CWC15 and HSPA8. Interacts directly with CWC15 and CDC5L in the complex. Interacts with AICDA; the interaction is important for the antibody diversification activity of AICDA. Interacts with PRPF31 (via its NLS). Interacts (via its N-terminal NLS) with KPNA1 and KPNA2.

It localises to the nucleus. Component of the PRP19-CDC5L complex that forms an integral part of the spliceosome and is required for activating pre-mRNA splicing. Participates in AID/AICDA-mediated somatic hypermutation (SHM) and class-switch recombination (CSR), 2 processes resulting in the production of high-affinity, mutated isotype-switched antibodies. This Bos taurus (Bovine) protein is Beta-catenin-like protein 1 (CTNNBL1).